The following is a 686-amino-acid chain: Band 4.1-like protein 4A (686 aa).

An FERM domain is found at phenylalanine 11–glutamate 299. A Phosphoserine modification is found at serine 304. Positions arginine 331 to threonine 686 are disordered. Residues alanine 357 to asparagine 376 are compositionally biased toward polar residues. A phosphoserine mark is found at serine 389, serine 393, and serine 402. Over residues glycine 418–serine 428 the composition is skewed to polar residues. Positions arginine 479–glutamate 489 are enriched in low complexity. Basic and acidic residues-rich tracts occupy residues valine 518–glutamine 527 and glutamine 547–valine 561. The span at isoleucine 588–arginine 601 shows a compositional bias: basic residues. Basic and acidic residues predominate over residues glycine 648–proline 658. The span at threonine 673–threonine 686 shows a compositional bias: polar residues.

In terms of tissue distribution, expressed in many tissues. High levels of expression in brain, liver, thymus and peripheral blood leukocytes and low levels of expression in heart, kidney, testis and colon.

It is found in the cytoplasm. The protein resides in the cytoskeleton. In Homo sapiens (Human), this protein is Band 4.1-like protein 4A.